Reading from the N-terminus, the 359-residue chain is Molybdenum import ATP-binding protein ModC (359 aa).

Residues 1–233 (MSGLTVSIRG…IDAESEGGGV (233 aa)) form the ABC transporter domain. 32 to 39 (GHSGAGKT) lines the ATP pocket. In terms of domain architecture, Mop spans 289 to 355 (AISIRNLLPV…VKAVSVDRAA (67 aa)).

It belongs to the ABC transporter superfamily. Molybdate importer (TC 3.A.1.8) family. In terms of assembly, the complex is composed of two ATP-binding proteins (ModC), two transmembrane proteins (ModB) and a solute-binding protein (ModA).

The protein resides in the cell inner membrane. It catalyses the reaction molybdate(out) + ATP + H2O = molybdate(in) + ADP + phosphate + H(+). In terms of biological role, part of the ABC transporter complex ModABC involved in molybdenum import. Responsible for energy coupling to the transport system. The sequence is that of Molybdenum import ATP-binding protein ModC from Brucella melitensis biotype 1 (strain ATCC 23456 / CCUG 17765 / NCTC 10094 / 16M).